Reading from the N-terminus, the 260-residue chain is MKVLVLGLCRTGTSSLYVAQKELGMKPYHFRDIAFNTEHMKLWLTAMRAKFDGVGKPFQGKDFDQMLGEYDSVADTPACFFVEELLAAYPEAKVILTTRSPQSWLHSMQNTLITVISWRSWTVLSLFDREHSAFYWPLFNRIMRVMAKGNDPWKASATPSYLEYFDEHYTKVRRLVPKDRLLEWHPSQGWEPVCEFLDFPVPEKEFPHICTSDGNVRTHRSTYWKRWRNVVQKGAQTVGLVGLTVGGIWYFRSRLVGSSR.

A signal peptide spans 1 to 15; that stretch reads MKVLVLGLCRTGTSS.

The protein belongs to the cytochrome P450 family.

It participates in secondary metabolite biosynthesis. Functionally, part of the cluster that mediates the biosynthesis of a highly modified cyclo-arginine-tryptophan dipeptide (cRW). The first step of the pathway is perfornmed by the arginine-containing cyclodipeptide synthase (RCPDS) avaA that acts as the scaffold-generating enzyme and is responsible for formation of the cyclo-Arg-Trp (cRW) diketopiperazine. AvaB then acts as a multifunctional flavoenzyme that is responsible for generating the cyclo-Arg-formylkynurenine DKP, which can be deformylated by avaC. AvaB then further catalyzes an additional N-oxidation followed by cyclization and dehydration. The next step is an N-acetylation of the guanidine group catalyzed by the arginine N-acetyltransferase avaD. The roles of the additional enzymes identified within the ava cluster still have to be determined. This Aspergillus versicolor protein is Ava biosynthesis cluster protein M.